The primary structure comprises 477 residues: Glycogen synthase (477 aa).

An ADP-alpha-D-glucose-binding site is contributed by Lys-15.

Belongs to the glycosyltransferase 1 family. Bacterial/plant glycogen synthase subfamily.

The enzyme catalyses [(1-&gt;4)-alpha-D-glucosyl](n) + ADP-alpha-D-glucose = [(1-&gt;4)-alpha-D-glucosyl](n+1) + ADP + H(+). The protein operates within glycan biosynthesis; glycogen biosynthesis. In terms of biological role, synthesizes alpha-1,4-glucan chains using ADP-glucose. The polypeptide is Glycogen synthase (Shigella sonnei (strain Ss046)).